The sequence spans 163 residues: MSDAEDIPTGRKRRPREQTPVQRALGLLVRREHSRKELTRKLTARGIEDEAAQAAVAKLTEAGWQDDARFAENLVRMRANTGYGPIHVRAELGTHGLDSEAIAAAMDSYEGDWQENARDLVRRRFGETGPQDLAQRRKAADLLARRGFDGDSIRRATRYDPDD.

The interval Met1 to Val21 is disordered.

Belongs to the RecX family.

It is found in the cytoplasm. In terms of biological role, modulates RecA activity. This is Regulatory protein RecX from Stenotrophomonas maltophilia (strain R551-3).